Reading from the N-terminus, the 326-residue chain is JNK1/MAPK8-associated membrane protein homolog (326 aa).

At 1 to 71 the chain is on the lumenal side; sequence MSSLSGHAST…CESCDTPLQP (71 aa). N-linked (GlcNAc...) asparagine glycosylation occurs at N27. A helical transmembrane segment spans residues 72–92; sequence YDWMYLLFIALLPLLLHMQFI. Residues 93-108 are Cytoplasmic-facing; that stretch reads RIARKYCRTRYYEVSE. Residues 109–129 traverse the membrane as a helical segment; it reads YLCVILENVIACVIAVLIYPP. The Lumenal portion of the chain corresponds to 130–166; sequence RFTFFLNGCSKTDIKEWYPACYNPRIGYTKTMRCTYE. Residues 167–187 traverse the membrane as a helical segment; the sequence is VVFPLYSITFIHHLILIGSIL. At 188-208 the chain is on the cytoplasmic side; that stretch reads VLRSTLYCVLLYKTYNGKPFY. 2 helical membrane-spanning segments follow: residues 209–229 and 230–250; these read AAIV…GVVF and YTFP…HLAL. The Cytoplasmic segment spans residues 251-269; it reads EGKRPLKEMIVRIATSPTH. Residues 270–290 traverse the membrane as a helical segment; that stretch reads LIFLSITMLMLSFGVIAIIAP. Over 291–296 the chain is Lumenal; sequence LDIPYR. A helical transmembrane segment spans residues 297–317; it reads WSFLCIVPVPFIFYMATIPFS. Over 318 to 326 the chain is Cytoplasmic; the sequence is NPTTTMRLS.

The protein resides in the endoplasmic reticulum membrane. Facilitates degradation of misfolded endoplasmic reticulum (ER) proteins through the recruitment of components of the proteasome and endoplasmic reticulum-associated degradation (ERAD) system. Involved in ER stress response. The protein is JNK1/MAPK8-associated membrane protein homolog of Caenorhabditis elegans.